A 626-amino-acid chain; its full sequence is MSQNQETRGFQSEVKQLLQLMIHSLYSNKEIFLRELISNASDAADKLRFKALSNPALYEGDGDLRVRVSFDADKGTITISDNGIGMTREQVIDHLGTIAKSGTKEFLTALGQDQAKNSQLIGQFGVGFYSAFIVADKVTVKTRAAGEEADKAVLWESAGEGEYSVADIEKKSRGTDVILHLREDEKEFLNEWRLREIIGKYSDHIGLPVEMLTKEYDDEGKECGEKWEKINKSDALWTRSKNDVSDEEYKAFYKHLSHDFVDPVTWAHNKVEGNQAYTSLLYVPAKAPWDLFNREHKHGLKLYVQRVFIMDDAEQFMPNYLRFMRGLIDSNDLPLNVSREILQDNKITAALRKALTKRSLQMLEKLAKDDAEKYLKFWKEFGLVLKEGPAEDFANKETIAKLLRFASTHNDGSEQTVSLEDYILRMKEGQKAIYYITADSYVAAKNSPHLELFNKKGIEVLLLSDRIDEWMLSYLTEFDGKQLQSITKADLDLGDLADKESETQKQQDKAFGSFIERVKNLLGERVKTVRLTHNLTDTPAVVSTDNDQMTTQMAKLFAAAGQPVPEVKYTFELNPEHYLVKKVADIADETEFADWVELLLEQAMLAERGSLENPAAFIKRINKLLG.

Residues 1–339 form an a; substrate-binding region; the sequence is MSQNQETRGF…SNDLPLNVSR (339 aa). The interval 340 to 555 is b; it reads EILQDNKITA…NDQMTTQMAK (216 aa). The c stretch occupies residues 556–626; it reads LFAAAGQPVP…FIKRINKLLG (71 aa).

The protein belongs to the heat shock protein 90 family. Homodimer.

It localises to the cytoplasm. Functionally, molecular chaperone. Has ATPase activity. The polypeptide is Chaperone protein HtpG (Haemophilus influenzae (strain 86-028NP)).